Consider the following 227-residue polypeptide: Cytochrome c oxidase subunit 2 (227 aa).

The Mitochondrial intermembrane portion of the chain corresponds to 1 to 14 (MAYPLQLGFQDAVS). A helical membrane pass occupies residues 15–45 (PIMEELLYFHDHTLMIVFLISSLVLYIITLM). Over 46-59 (LTTKLTHTNTMNAQ) the chain is Mitochondrial matrix. The chain crosses the membrane as a helical span at residues 60–87 (EVETVWTILPAIILILIALPSLRILYMM). At 88 to 227 (DEINNPSLTV…TFEKWTASLL (140 aa)) the chain is on the mitochondrial intermembrane side. Cu cation contacts are provided by histidine 161, cysteine 196, glutamate 198, cysteine 200, histidine 204, and methionine 207. Glutamate 198 serves as a coordination point for Mg(2+).

Belongs to the cytochrome c oxidase subunit 2 family. As to quaternary structure, component of the cytochrome c oxidase (complex IV, CIV), a multisubunit enzyme composed of 14 subunits. The complex is composed of a catalytic core of 3 subunits MT-CO1, MT-CO2 and MT-CO3, encoded in the mitochondrial DNA, and 11 supernumerary subunits COX4I, COX5A, COX5B, COX6A, COX6B, COX6C, COX7A, COX7B, COX7C, COX8 and NDUFA4, which are encoded in the nuclear genome. The complex exists as a monomer or a dimer and forms supercomplexes (SCs) in the inner mitochondrial membrane with NADH-ubiquinone oxidoreductase (complex I, CI) and ubiquinol-cytochrome c oxidoreductase (cytochrome b-c1 complex, complex III, CIII), resulting in different assemblies (supercomplex SCI(1)III(2)IV(1) and megacomplex MCI(2)III(2)IV(2)). Found in a complex with TMEM177, COA6, COX18, COX20, SCO1 and SCO2. Interacts with TMEM177 in a COX20-dependent manner. Interacts with COX20. Interacts with COX16. Cu cation is required as a cofactor.

It localises to the mitochondrion inner membrane. The enzyme catalyses 4 Fe(II)-[cytochrome c] + O2 + 8 H(+)(in) = 4 Fe(III)-[cytochrome c] + 2 H2O + 4 H(+)(out). Functionally, component of the cytochrome c oxidase, the last enzyme in the mitochondrial electron transport chain which drives oxidative phosphorylation. The respiratory chain contains 3 multisubunit complexes succinate dehydrogenase (complex II, CII), ubiquinol-cytochrome c oxidoreductase (cytochrome b-c1 complex, complex III, CIII) and cytochrome c oxidase (complex IV, CIV), that cooperate to transfer electrons derived from NADH and succinate to molecular oxygen, creating an electrochemical gradient over the inner membrane that drives transmembrane transport and the ATP synthase. Cytochrome c oxidase is the component of the respiratory chain that catalyzes the reduction of oxygen to water. Electrons originating from reduced cytochrome c in the intermembrane space (IMS) are transferred via the dinuclear copper A center (CU(A)) of subunit 2 and heme A of subunit 1 to the active site in subunit 1, a binuclear center (BNC) formed by heme A3 and copper B (CU(B)). The BNC reduces molecular oxygen to 2 water molecules using 4 electrons from cytochrome c in the IMS and 4 protons from the mitochondrial matrix. In Hippopotamus amphibius (Hippopotamus), this protein is Cytochrome c oxidase subunit 2 (MT-CO2).